Here is a 105-residue protein sequence, read N- to C-terminus: Co-chaperonin GroES (105 aa).

It belongs to the GroES chaperonin family. Heptamer of 7 subunits arranged in a ring. Interacts with the chaperonin GroEL.

Its subcellular location is the cytoplasm. Its function is as follows. Together with the chaperonin GroEL, plays an essential role in assisting protein folding. The GroEL-GroES system forms a nano-cage that allows encapsulation of the non-native substrate proteins and provides a physical environment optimized to promote and accelerate protein folding. GroES binds to the apical surface of the GroEL ring, thereby capping the opening of the GroEL channel. The protein is Co-chaperonin GroES of Methylovorus sp. (strain SS1 / DSM 11726).